A 710-amino-acid polypeptide reads, in one-letter code: Prolyl endopeptidase (710 aa).

Position 1 is an N-acetylmethionine (Met1). Lys157 bears the N6-acetyllysine mark. Catalysis depends on charge relay system residues Ser554, Asp641, and His680.

This sequence belongs to the peptidase S9A family. As to quaternary structure, monomer. In terms of processing, the N-terminus is blocked.

The protein resides in the cytoplasm. The catalysed reaction is Hydrolysis of Pro-|-Xaa &gt;&gt; Ala-|-Xaa in oligopeptides.. In terms of biological role, cleaves peptide bonds on the C-terminal side of prolyl residues within peptides that are up to approximately 30 amino acids long. This Homo sapiens (Human) protein is Prolyl endopeptidase (PREP).